We begin with the raw amino-acid sequence, 121 residues long: Small ribosomal subunit protein uS13 (121 aa).

The tract at residues 91–121 (HRRGLPVRGQNTKNNARTRKGKKASMAGKKK) is disordered. Basic residues predominate over residues 106–121 (ARTRKGKKASMAGKKK).

It belongs to the universal ribosomal protein uS13 family. Part of the 30S ribosomal subunit. Forms a loose heterodimer with protein S19. Forms two bridges to the 50S subunit in the 70S ribosome.

Located at the top of the head of the 30S subunit, it contacts several helices of the 16S rRNA. In the 70S ribosome it contacts the 23S rRNA (bridge B1a) and protein L5 of the 50S subunit (bridge B1b), connecting the 2 subunits; these bridges are implicated in subunit movement. Contacts the tRNAs in the A and P-sites. The protein is Small ribosomal subunit protein uS13 of Lacticaseibacillus paracasei (strain ATCC 334 / BCRC 17002 / CCUG 31169 / CIP 107868 / KCTC 3260 / NRRL B-441) (Lactobacillus paracasei).